The following is a 362-amino-acid chain: Oxysterol-binding protein 5 (362 aa).

The protein belongs to the OSBP family.

This Dictyostelium discoideum (Social amoeba) protein is Oxysterol-binding protein 5 (osbE).